A 495-amino-acid chain; its full sequence is Ectonucleoside triphosphate diphosphohydrolase 8 (495 aa).

The Cytoplasmic portion of the chain corresponds to 1–8; the sequence is MGLTWKQR. A helical transmembrane segment spans residues 9–29; that stretch reads VFTALLGAAAVSGLTALLLVL. Residues 30 to 466 lie on the Extracellular side of the membrane; the sequence is VGTMNVLLPP…PAQGWAQSFG (437 aa). An intrachain disulfide couples Cys78 to Cys102. The active-site Proton acceptor is the Glu168. Cys246 and Cys292 are oxidised to a cystine. N-linked (GlcNAc...) asparagine glycosylation is found at Asn303 and Asn324. 2 disulfide bridges follow: Cys328–Cys334 and Cys380–Cys403. A helical transmembrane segment spans residues 467 to 487; sequence VWAAGVVFVVLTLAATLGAVA. Over 488–495 the chain is Cytoplasmic; that stretch reads VQVFWLQD.

The protein belongs to the GDA1/CD39 NTPase family. Ca(2+) serves as cofactor. Mg(2+) is required as a cofactor. Post-translationally, N-glycosylated.

Its subcellular location is the cell membrane. It carries out the reaction a ribonucleoside 5'-triphosphate + 2 H2O = a ribonucleoside 5'-phosphate + 2 phosphate + 2 H(+). Functionally, canalicular ectonucleoside NTPDase responsible for the main hepatic NTPDase activity. Ectonucleoside NTPDases catalyze the hydrolysis of gamma- and beta-phosphate residues of nucleotides, playing a central role in concentration of extracellular nucleotides. Has activity toward ATP, ADP, UTP and UDP, but not toward AMP. The chain is Ectonucleoside triphosphate diphosphohydrolase 8 (ENTPD8) from Bos taurus (Bovine).